Consider the following 892-residue polypeptide: MPILLFLIDTSASMNQRTYLGTTYLDIAKGAVEIFMKLRARDPASRGDRYMLVTFDDPPYGVKAGWKENHATFMSELKNLQASGLTTLGHALRAAFDLLNLNRLVSGIDNYGQGRNPFFLEPSVIITITDGNKLTHSSGVAEELHLPLNSPLPGSELTKEPFRWDQRLFALVLRLPGVAVPDSEQLGSVPTDESAITQMCEVTGGRSYCVRTQRMLNQCLESLVQKVLSGVVIHFEKTGPDPPVIGEDGLVDPARPLTSFSPQPWHSCHKLIYVRPNPKTGVPVGHWPISESFWPDQNSPTLPPRSAHPVVRFSCVDCEPMVIDKLPFDKYELEPSPLTQYILERKSPHMCWQVFVNCSGKHSDVAHPFGYLKASTTLTCVNLFVMPYNYPVLLPLLDDLFKVHKLKPNLKWRQSFEMYLKSMPPYYLLPLKKALRMMGAPNLISDNMDCGLSYSVISYLKKLSQQAKIESDRLIVSVGKKPPPETGIKVKNHSNALSLAHRRDFKQLLQGITGEVPLRLIDMNFKEFAGFQIALLNKDLKPQAYRNAYDIPRRNLLDQVTRMRSNLLRTTQKLIRGQDDDSLHSIPVGQMGNYQEYLKMMPSPLREIDPDQPKRLHTFGNPFKQDKKGMMIDEADEFVTGPQNKKRGNTGDLNSGTALKRRRSMSPLLRRPQTPPIITNHVLGKGPTGTQGQQGIIKPIPLHKGAEGNNVGGTESNGERVAGTDAGDCWPGEVDGESGEPAPVEDREDAAAPDGEEEILALENCLDDRSPDHTQNCEELSPPGQEGEMEVNEGDTPAQGTIVMIPLEGSNAELRTRVIKEVRKPGRNYEAIFRLLEEVKGPVSVQRYFIHHAIKEAARFKKRMLIQQLETALEEIEDRQMLPAQINNIHSR.

One can recognise a VWFA domain in the interval 3 to 227; it reads ILLFLIDTSA…QCLESLVQKV (225 aa). An Inhibitory loop motif is present at residues 630–637; that stretch reads MMIDEADE. 3 disordered regions span residues 665–692, 711–754, and 771–793; these read MSPLLRRPQTPPIITNHVLGKGPTGTQG, VGGT…AAPD, and PDHTQNCEELSPPGQEGEMEVNE.

The protein belongs to the Integrator subunit 6 family. Component of the Integrator complex, composed of core subunits INTS1, INTS2, INTS3, INTS4, INTS5, INTS6, INTS7, INTS8, INTS9/RC74, INTS10, INTS11/CPSF3L, INTS12, INTS13, INTS14 and INTS15. The core complex associates with protein phosphatase 2A subunits PPP2CA and PPP2R1A, to form the Integrator-PP2A (INTAC) complex.

Its subcellular location is the nucleus. It localises to the chromosome. Its function is as follows. Component of the integrator complex, a multiprotein complex that terminates RNA polymerase II (Pol II) transcription in the promoter-proximal region of genes. The integrator complex provides a quality checkpoint during transcription elongation by driving premature transcription termination of transcripts that are unfavorably configured for transcriptional elongation: the complex terminates transcription by (1) catalyzing dephosphorylation of the C-terminal domain (CTD) of Pol II subunit POLR2A/RPB1 and SUPT5H/SPT5, (2) degrading the exiting nascent RNA transcript via endonuclease activity and (3) promoting the release of Pol II from bound DNA. The integrator complex is also involved in terminating the synthesis of non-coding Pol II transcripts, such as enhancer RNAs (eRNAs), small nuclear RNAs (snRNAs), telomerase RNAs and long non-coding RNAs (lncRNAs). Within the integrator complex, INTS6 acts as a molecular adapter that promotes assembly of protein phosphatase 2A (PP2A) subunits to the integrator core complex, promoting recruitment of PP2A to transcription pause-release checkpoint. This is Integrator complex subunit 6 (ints6l) from Danio rerio (Zebrafish).